The following is a 387-amino-acid chain: Exodeoxyribonuclease 7 large subunit (387 aa).

The protein belongs to the XseA family. Heterooligomer composed of large and small subunits.

The protein resides in the cytoplasm. The enzyme catalyses Exonucleolytic cleavage in either 5'- to 3'- or 3'- to 5'-direction to yield nucleoside 5'-phosphates.. Its function is as follows. Bidirectionally degrades single-stranded DNA into large acid-insoluble oligonucleotides, which are then degraded further into small acid-soluble oligonucleotides. The protein is Exodeoxyribonuclease 7 large subunit of Campylobacter lari (strain RM2100 / D67 / ATCC BAA-1060).